The chain runs to 364 residues: uncharacterized protein (364 aa).

3 helical membrane-spanning segments follow: residues 41-61, 298-318, and 329-349; these read NIFT…FFGL, VIYI…ITYM, and LLFY…SIII.

It localises to the membrane. This is an uncharacterized protein from Mycoplasma capricolum subsp. capricolum (strain California kid / ATCC 27343 / NCTC 10154).